A 447-amino-acid polypeptide reads, in one-letter code: Polyamine export protein (447 aa).

The Cytoplasmic segment spans residues 1 to 4 (MLNS). The 197-residue stretch at 1–197 (MLNSILVILC…ALAGVLRKQE (197 aa)) folds into the CNNM transmembrane domain. A helical transmembrane segment spans residues 5 to 25 (ILVILCLIAVSAFFSMSEISL). At 26–54 (AASRKIKLKLLADEGNINAQRVLNMQENP) the chain is on the periplasmic side. A helical transmembrane segment spans residues 55-75 (GMFFTVVQIGLNAVAILGGIV). Residues 76–99 (GDAAFSPAFHSLFSRYMSAELSEQ) are Cytoplasmic-facing. The helical transmembrane segment at 100-120 (LSFILSFSLVTGMFILFADLT) threads the bilayer. At 121 to 141 (PKRIGMIAPEAVALRIINPMR) the chain is on the periplasmic side. Residues 142–162 (FCLYVCTPLVWFFNGLANIIF) form a helical membrane-spanning segment. The Cytoplasmic portion of the chain corresponds to 163 to 447 (RIFKLPMVRK…DAKDKEESVA (285 aa)). 2 CBS domains span residues 216–275 (MTPR…NQSL) and 282–343 (QIRN…GLEE).

Belongs to the UPF0053 family. PaeA subfamily.

The protein resides in the cell inner membrane. Involved in cadaverine and putrescine tolerance in stationary phase. May facilitate the efflux of both cadaverine and putrescine from the cytoplasm, reducing potentially toxic levels under certain stress conditions. This chain is Polyamine export protein, found in Escherichia coli O157:H7.